The sequence spans 163 residues: ATP synthase subunit b 1 (163 aa).

The helical transmembrane segment at 7 to 27 threads the bilayer; it reads PETWVAIAFVILMGLFAYLGV.

This sequence belongs to the ATPase B chain family. F-type ATPases have 2 components, F(1) - the catalytic core - and F(0) - the membrane proton channel. F(1) has five subunits: alpha(3), beta(3), gamma(1), delta(1), epsilon(1). F(0) has three main subunits: a(1), b(2) and c(10-14). The alpha and beta chains form an alternating ring which encloses part of the gamma chain. F(1) is attached to F(0) by a central stalk formed by the gamma and epsilon chains, while a peripheral stalk is formed by the delta and b chains.

It is found in the cell inner membrane. F(1)F(0) ATP synthase produces ATP from ADP in the presence of a proton or sodium gradient. F-type ATPases consist of two structural domains, F(1) containing the extramembraneous catalytic core and F(0) containing the membrane proton channel, linked together by a central stalk and a peripheral stalk. During catalysis, ATP synthesis in the catalytic domain of F(1) is coupled via a rotary mechanism of the central stalk subunits to proton translocation. In terms of biological role, component of the F(0) channel, it forms part of the peripheral stalk, linking F(1) to F(0). This chain is ATP synthase subunit b 1, found in Bradyrhizobium sp. (strain BTAi1 / ATCC BAA-1182).